Here is a 197-residue protein sequence, read N- to C-terminus: Recombination protein RecR (197 aa).

The segment at 56 to 71 adopts a C4-type zinc-finger fold; the sequence is CSRCFNLSAEDPCDIC. In terms of domain architecture, Toprim spans 79-174; the sequence is ETICVVAEPR…RVTRIAFGLP (96 aa).

Belongs to the RecR family.

Functionally, may play a role in DNA repair. It seems to be involved in an RecBC-independent recombinational process of DNA repair. It may act with RecF and RecO. This is Recombination protein RecR from Gloeobacter violaceus (strain ATCC 29082 / PCC 7421).